A 142-amino-acid polypeptide reads, in one-letter code: MAP3K7 C-terminal-like protein (142 aa).

In terms of tissue distribution, detected in lung and peripheral blood leukocytes. Expressed predominantly in peripheral blood leukocytes and ubiquitously in adult and fetal tissues. Also expressed strongly in breast carcinoma GI-101, colon adenocarcinoma GI-112, and prostatic adenocarcinoma PC3.

The chain is MAP3K7 C-terminal-like protein (MAP3K7CL) from Homo sapiens (Human).